A 225-amino-acid polypeptide reads, in one-letter code: Cytidylate kinase (225 aa).

ATP is bound at residue 10 to 18 (GPASSGKST).

The protein belongs to the cytidylate kinase family. Type 1 subfamily.

It localises to the cytoplasm. It carries out the reaction CMP + ATP = CDP + ADP. The enzyme catalyses dCMP + ATP = dCDP + ADP. In Streptococcus gordonii (strain Challis / ATCC 35105 / BCRC 15272 / CH1 / DL1 / V288), this protein is Cytidylate kinase.